A 32-amino-acid chain; its full sequence is Ranatuerin-2CSa (32 aa).

A disulfide bond links Cys-27 and Cys-32.

In terms of tissue distribution, expressed by the skin glands.

It localises to the secreted. The protein localises to the target cell membrane. Functionally, antibacterial peptide with amphipathic alpha-helical structure. Active against E.coli ATCC 25726 (MIC=4-5 uM) and S.aureus ATCC 25923 (MIC=8-10 uM). Has a weak hemolytic activity on human erythrocytes (LC(50)=150-160 uM). The protein is Ranatuerin-2CSa of Rana cascadae (Cascades frog).